The primary structure comprises 386 residues: Ferrochelatase (386 aa).

Fe cation-binding residues include histidine 196 and glutamate 277.

Belongs to the ferrochelatase family.

Its subcellular location is the cytoplasm. The enzyme catalyses heme b + 2 H(+) = protoporphyrin IX + Fe(2+). It functions in the pathway porphyrin-containing compound metabolism; protoheme biosynthesis; protoheme from protoporphyrin-IX: step 1/1. Its function is as follows. Catalyzes the ferrous insertion into protoporphyrin IX. The chain is Ferrochelatase from Picosynechococcus sp. (strain ATCC 27264 / PCC 7002 / PR-6) (Agmenellum quadruplicatum).